The sequence spans 203 residues: Probable nicotinate-nucleotide adenylyltransferase (203 aa).

It belongs to the NadD family.

The catalysed reaction is nicotinate beta-D-ribonucleotide + ATP + H(+) = deamido-NAD(+) + diphosphate. It participates in cofactor biosynthesis; NAD(+) biosynthesis; deamido-NAD(+) from nicotinate D-ribonucleotide: step 1/1. Its function is as follows. Catalyzes the reversible adenylation of nicotinate mononucleotide (NaMN) to nicotinic acid adenine dinucleotide (NaAD). This chain is Probable nicotinate-nucleotide adenylyltransferase, found in Prosthecochloris aestuarii (strain DSM 271 / SK 413).